Reading from the N-terminus, the 130-residue chain is Small ribosomal subunit protein uS9 (130 aa).

This sequence belongs to the universal ribosomal protein uS9 family.

The protein is Small ribosomal subunit protein uS9 of Clostridium beijerinckii (strain ATCC 51743 / NCIMB 8052) (Clostridium acetobutylicum).